Here is a 270-residue protein sequence, read N- to C-terminus: Short chain dehydrogenase/reductase dpfgG (270 aa).

The NADP(+) site is built by I18, D69, N96, K130, K171, I200, and N204. K171 serves as the catalytic Lowers pKa of active site Tyr.

The protein belongs to the short-chain dehydrogenases/reductases (SDR) family.

Its pathway is secondary metabolite biosynthesis; terpenoid biosynthesis. In terms of biological role, short chain dehydrogenase/reductase; part of the gene cluster that mediates the biosynthesis of diterpenoid pyrones. The first step of the pathway is the synthesis of the alpha-pyrone moiety by the polyketide synthase dpfgA via condensation of one acetyl-CoA starter unit with 3 malonyl-CoA units and 2 methylations. The alpha-pyrone is then combined with geranylgeranyl pyrophosphate (GGPP) formed by the GGPP synthase dpfgD through the action of the prenyltransferase dpfgC to yield a linear alpha-pyrone diterpenoid. Subsequent steps in the diterpenoid pyrone biosynthetic pathway involve the decalin core formation, which is initiated by the epoxidation of the C10-C11 olefin by the FAD-dependent oxidoreductase dpfgE, and is followed by a cyclization cascade catalyzed by the terpene cyclase dpfgB. The short chain dehydrogenase/reductase dpfgG then oxidizes the 8S hydroxy group to a ketone and the short chain dehydrogenase/reductase dpfgH reduces the ketone to the 8R hydroxy group to yield higginsianin B. Higginsianin B is further methylated by the methyltransferase dpfgI to produce the intermediate named FDDP B. The cytochrome P450 monooxygenase dfgpJ then catalyzes a three-step oxidation at C-27 to generate a carboxylic acid as well as C-26 hydroxylation. Finally, methyltransferase dpfgK methylates the carboxylic acid generated by dpfgJ, yielding the final diterpenoid pyrones from the pathway which were named FDDP D and FDDP E. In Gibberella zeae (strain ATCC MYA-4620 / CBS 123657 / FGSC 9075 / NRRL 31084 / PH-1) (Wheat head blight fungus), this protein is Short chain dehydrogenase/reductase dpfgG.